The chain runs to 260 residues: Indole-3-glycerol phosphate synthase (260 aa).

Belongs to the TrpC family.

The catalysed reaction is 1-(2-carboxyphenylamino)-1-deoxy-D-ribulose 5-phosphate + H(+) = (1S,2R)-1-C-(indol-3-yl)glycerol 3-phosphate + CO2 + H2O. It participates in amino-acid biosynthesis; L-tryptophan biosynthesis; L-tryptophan from chorismate: step 4/5. In Bacteroides thetaiotaomicron (strain ATCC 29148 / DSM 2079 / JCM 5827 / CCUG 10774 / NCTC 10582 / VPI-5482 / E50), this protein is Indole-3-glycerol phosphate synthase.